Consider the following 410-residue polypeptide: Serine hydroxymethyltransferase (410 aa).

Residues Leu119 and 123–125 contribute to the (6S)-5,6,7,8-tetrahydrofolate site; that span reads GHL. Lys228 bears the N6-(pyridoxal phosphate)lysine mark. 351-353 serves as a coordination point for (6S)-5,6,7,8-tetrahydrofolate; that stretch reads SPF.

The protein belongs to the SHMT family. As to quaternary structure, homodimer. It depends on pyridoxal 5'-phosphate as a cofactor.

Its subcellular location is the cytoplasm. It carries out the reaction (6R)-5,10-methylene-5,6,7,8-tetrahydrofolate + glycine + H2O = (6S)-5,6,7,8-tetrahydrofolate + L-serine. It functions in the pathway one-carbon metabolism; tetrahydrofolate interconversion. Its pathway is amino-acid biosynthesis; glycine biosynthesis; glycine from L-serine: step 1/1. In terms of biological role, catalyzes the reversible interconversion of serine and glycine with tetrahydrofolate (THF) serving as the one-carbon carrier. This reaction serves as the major source of one-carbon groups required for the biosynthesis of purines, thymidylate, methionine, and other important biomolecules. Also exhibits THF-independent aldolase activity toward beta-hydroxyamino acids, producing glycine and aldehydes, via a retro-aldol mechanism. The polypeptide is Serine hydroxymethyltransferase (Clostridium perfringens (strain 13 / Type A)).